The primary structure comprises 506 residues: Anaerobic nitric oxide reductase transcription regulator NorR (506 aa).

Residue D57 is modified to 4-aspartylphosphate. A Sigma-54 factor interaction domain is found at M187 to V416. Residues G215–E222 and A278–E287 contribute to the ATP site. Residues W481–K500 constitute a DNA-binding region (H-T-H motif).

The protein operates within nitrogen metabolism; nitric oxide reduction. Its function is as follows. Required for the expression of anaerobic nitric oxide (NO) reductase, acts as a transcriptional activator for at least the norVW operon. Activation also requires sigma-54. This is Anaerobic nitric oxide reductase transcription regulator NorR from Salmonella dublin (strain CT_02021853).